Consider the following 332-residue polypeptide: Ribosomal RNA small subunit methyltransferase H (332 aa).

S-adenosyl-L-methionine is bound by residues 39–41 (GGY), Asp56, Phe83, Asp100, and Gln107.

Belongs to the methyltransferase superfamily. RsmH family.

The protein localises to the cytoplasm. The enzyme catalyses cytidine(1402) in 16S rRNA + S-adenosyl-L-methionine = N(4)-methylcytidine(1402) in 16S rRNA + S-adenosyl-L-homocysteine + H(+). Specifically methylates the N4 position of cytidine in position 1402 (C1402) of 16S rRNA. The chain is Ribosomal RNA small subunit methyltransferase H from Bartonella tribocorum (strain CIP 105476 / IBS 506).